The sequence spans 835 residues: BCL11 transcription factor A (835 aa).

A compositionally biased stretch (basic residues) spans 1 to 12; it reads MSRRKQGKPQHL. The disordered stretch occupies residues 1–41; that stretch reads MSRRKQGKPQHLSKREFSPEPLEAILTDDEPDHGPLGAPEG. Positions 1–210 are required for nuclear body formation and for SUMO1 recruitment; the sequence is MSRRKQGKPQ…SEHGSPLTPR (210 aa). A C2HC-type zinc finger spans residues 45 to 71; the sequence is LLTCGQCQMNFPLGDILIFIEHKRKQC. Residues Cys48, Cys51, His66, and Cys71 each contribute to the Zn(2+) site. Ser86 bears the Phosphoserine mark. Glycyl lysine isopeptide (Lys-Gly) (interchain with G-Cter in SUMO2) cross-links involve residues Lys123 and Lys164. The segment at 170-193 adopts a C2H2-type 1 zinc-finger fold; it reads YTCTTCKQPFTSAWFLLQHAQNTH. Phosphoserine is present on Ser205. An Asymmetric dimethylarginine modification is found at Arg271. The interval 323–376 is disordered; it reads AGNTSSPPLSPGRPSPMQRLLQPFQPGSKPPFLATPPLPPLQSAPPPSQPPVKS. 2 positions are modified to phosphoserine: Ser332 and Ser337. Positions 355–372 are enriched in pro residues; it reads LATPPLPPLQSAPPPSQP. C2H2-type zinc fingers lie at residues 377-399 and 405-429; these read KSCEFCGKTFKFQSNLVVHRRSH and YKCNLCDHACTQASKLKRHMKTHMH. Positions 421-430 are enriched in basic residues; sequence KRHMKTHMHK. Disordered regions lie at residues 421 to 458, 471 to 512, and 572 to 619; these read KRHMKTHMHKSSPMTVKSDDGLSTASSPEPGTSDLVGS, KSEN…ERVD, and RGHL…GLSK. The segment covering 441–450 has biased composition (polar residues); sequence GLSTASSPEP. 2 positions are modified to phosphoserine: Ser446 and Ser447. Acidic residues predominate over residues 482–506; that stretch reads NGDEEEEEDDEEEEEEEEEEEEELT. Residues 574–584 show a composition bias toward basic and acidic residues; that stretch reads HLAEAEGHRDT. A Phosphoserine modification is found at Ser608. Residue Lys620 forms a Glycyl lysine isopeptide (Lys-Gly) (interchain with G-Cter in SUMO2) linkage. 2 positions are modified to phosphoserine: Ser625 and Ser630. Lys634 is covalently cross-linked (Glycyl lysine isopeptide (Lys-Gly) (interchain with G-Cter in SUMO1)). The disordered stretch occupies residues 678–740; sequence DSRQSPFASS…GRPSSKEGRR (63 aa). The span at 682-696 shows a compositional bias: low complexity; the sequence is SPFASSSEHSSENGS. Phosphothreonine is present on Thr701. The span at 706–720 shows a compositional bias: gly residues; sequence LDGGISGRSGTGSGG. The interval 737–835 is DNA-binding; the sequence is EGRRSDTCEY…RVLNNDIKTE (99 aa). The C2H2-type 4 zinc-finger motif lies at 742-764; it reads DTCEYCGKVFKNCSNLTVHRRSH. Positions 744, 747, 760, and 764 each coordinate Zn(2+). The segment at 765–769 is disordered; the sequence is TGERP. The C2H2-type 5 zinc-finger motif lies at 770-792; the sequence is YKCELCNYACAQSSKLTRHMKTH. Residues Cys772, Cys775, His788, and His792 each coordinate Zn(2+). Residues 793–799 form a disordered region; sequence GQVGKDV. Residues 800–823 form a C2H2-type 6 zinc finger; the sequence is YKCEICKMPFSVYSTLEKHMKKWH. Cys802, Cys805, His818, and His823 together coordinate Zn(2+). Lys833 is covalently cross-linked (Glycyl lysine isopeptide (Lys-Gly) (interchain with G-Cter in SUMO2)).

As to quaternary structure, homotetrameric; self-associates via C2HC-type zinc finger domain. Interacts with MTA2, a component of the nucleosome remodeling and deacetylase (NuRD) repressor complex. Interacts (via its C2H2-type zinc finger domains 4, 5 and 6) with promoter region of gamma-globulin. Interacts with NR2F1, PIAS3, NR2F2 and NR2F6. Isoform 1, isoform 2 and isoform 3 form homodimers and heterodimers. Isoform 2 interacts with TBR1. In terms of processing, sumoylated with SUMO1. As to expression, expressed at high levels in brain, spleen thymus, bone marrow and testis. Expressed in CD34-positive myeloid precursor cells, B-cells, monocytes and megakaryocytes. Expression is tightly regulated during B-cell development. In terms of tissue distribution, expressed in fetal and adult brain, and in the plasmacytoid dendritic cell.

The protein localises to the cytoplasm. It is found in the nucleus. The protein resides in the chromosome. It localises to the nucleus matrix. In terms of biological role, transcription factor. Associated with the BAF SWI/SNF chromatin remodeling complex. Binds to the 5'-TGACCA-3' sequence motif in regulatory regions of target genes, including a distal promoter of the HBG1 hemoglobin subunit gamma-1 gene. Involved in regulation of the developmental switch from gamma- to beta-globin, probably via direct repression of HBG1; hence indirectly repressing fetal hemoglobin (HbF) level. Involved in brain development. May play a role in hematopoiesis. Essential factor in lymphopoiesis required for B-cell formation in fetal liver. May function as a modulator of the transcriptional repression activity of NR2F2. In Homo sapiens (Human), this protein is BCL11 transcription factor A (BCL11A).